We begin with the raw amino-acid sequence, 168 residues long: MADLFALTEEALAGMDIELVDVERAAMGLLRVTIDRVDGVRIEDCEQVSRQLSHVYEVENIDYKRLEVGSPGVDRPLRNEAEFRRFAGERIEIKLREALDGRKVFSGTLRAPEADGASGQDDTAGAGKAVFGLEFEAKKNDIQVLSFTLDDIERAKLDPVLDFKGKKR.

This sequence belongs to the RimP family.

It is found in the cytoplasm. Required for maturation of 30S ribosomal subunits. The polypeptide is Ribosome maturation factor RimP (Bordetella parapertussis (strain 12822 / ATCC BAA-587 / NCTC 13253)).